Here is a 152-residue protein sequence, read N- to C-terminus: Sec-independent protein translocase protein TatB (152 aa).

Residues methionine 1–glycine 21 traverse the membrane as a helical segment. Positions histidine 98–proline 115 are enriched in low complexity. The disordered stretch occupies residues histidine 98–proline 152. Pro residues predominate over residues alanine 116–threonine 127. Residues alanine 128 to proline 142 show a composition bias toward low complexity.

Belongs to the TatB family. The Tat system comprises two distinct complexes: a TatABC complex, containing multiple copies of TatA, TatB and TatC subunits, and a separate TatA complex, containing only TatA subunits. Substrates initially bind to the TatABC complex, which probably triggers association of the separate TatA complex to form the active translocon.

It localises to the cell inner membrane. In terms of biological role, part of the twin-arginine translocation (Tat) system that transports large folded proteins containing a characteristic twin-arginine motif in their signal peptide across membranes. Together with TatC, TatB is part of a receptor directly interacting with Tat signal peptides. TatB may form an oligomeric binding site that transiently accommodates folded Tat precursor proteins before their translocation. This chain is Sec-independent protein translocase protein TatB, found in Pseudomonas fluorescens (strain ATCC BAA-477 / NRRL B-23932 / Pf-5).